The chain runs to 123 residues: Defensin beta 118 (123 aa).

Residues 1 to 19 (MKLLLLALPILVLLPQVIP) form the signal peptide. 3 disulfide bridges follow: Cys-27-Cys-54, Cys-34-Cys-48, and Cys-38-Cys-55. The propeptide occupies 65–123 (LPTTSPTPLSDSTPGIIDNILTIRFTTDYFEISSKKDMVEESEAGQGTQTSPPNVHHTS). The disordered stretch occupies residues 100-123 (KDMVEESEAGQGTQTSPPNVHHTS). Polar residues predominate over residues 109-123 (GQGTQTSPPNVHHTS).

The protein belongs to the beta-defensin family. In terms of processing, the three-dimensional structure formed by the three intramolecular disulfide bridges is indispensable for antimicrobial activity. High-level and epididymis-specific expression. Most abundant in the epithelium of the caput and is also present in the lumen and bound to sperm.

It localises to the secreted. Its function is as follows. Host defense peptide that exhibits antimicrobial activity against both Gram-negative bacteria, such as E.coli and S.typhimurium, and Gram-positive bacteria, such as S.aureus and B.subtilis. Inhibits cell adhesion of E.coli on intestinal epithelial enterocytes. Causes rapid permeabilization of both the outer and inner membrane of E.coli, leading to morphological alterations on the bacterial surface. Binds to bacterial lipopolysaccharides (LPS) with high affinity, and may thereby be involved in immunoregulation through LPS neutralization. May contribute to epididymal innate immunity and protect the sperm against attack by microorganisms. The polypeptide is Defensin beta 118 (DEFB118) (Macaca mulatta (Rhesus macaque)).